The sequence spans 346 residues: UPF0283 membrane protein VIBHAR_01918 (346 aa).

The span at 1–17 (MSELKQKQVFKEKVMHS) shows a compositional bias: basic and acidic residues. A disordered region spans residues 1 to 28 (MSELKQKQVFKEKVMHSEEEDVSPELNT). The next 2 membrane-spanning stretches (helical) occupy residues 73-93 (LFAT…ITAI) and 98-118 (WLAL…LGAL).

The protein belongs to the UPF0283 family.

The protein localises to the cell inner membrane. This is UPF0283 membrane protein VIBHAR_01918 from Vibrio campbellii (strain ATCC BAA-1116).